Here is a 339-residue protein sequence, read N- to C-terminus: DNA-directed RNA polymerase subunit alpha (339 aa).

Residues Met1–Glu235 form an alpha N-terminal domain (alpha-NTD) region. Residues Phe251–Tyr339 are alpha C-terminal domain (alpha-CTD).

The protein belongs to the RNA polymerase alpha chain family. In terms of assembly, homodimer. The RNAP catalytic core consists of 2 alpha, 1 beta, 1 beta' and 1 omega subunit. When a sigma factor is associated with the core the holoenzyme is formed, which can initiate transcription.

It catalyses the reaction RNA(n) + a ribonucleoside 5'-triphosphate = RNA(n+1) + diphosphate. Its function is as follows. DNA-dependent RNA polymerase catalyzes the transcription of DNA into RNA using the four ribonucleoside triphosphates as substrates. This chain is DNA-directed RNA polymerase subunit alpha, found in Afipia carboxidovorans (strain ATCC 49405 / DSM 1227 / KCTC 32145 / OM5) (Oligotropha carboxidovorans).